The following is a 41-amino-acid chain: LGNVLVCVLAHHFGKEFTPQVQAAYQKVVAGVANALAHKYH.

The Globin domain occupies 1 to 41 (LGNVLVCVLAHHFGKEFTPQVQAAYQKVVAGVANALAHKYH). Lys39 is subject to N6-acetyllysine.

This sequence belongs to the globin family. Heterotetramer of two alpha chains and two beta chains. Red blood cells.

In terms of biological role, involved in oxygen transport from the lung to the various peripheral tissues. The sequence is that of Hemoglobin subunit beta (HBB) from Colobus guereza (Mantled guereza).